A 244-amino-acid chain; its full sequence is Uridylate kinase (244 aa).

15-18 (KLSG) contributes to the ATP binding site. The involved in allosteric activation by GTP stretch occupies residues 23-28 (GSEGFG). A UMP-binding site is contributed by Gly57. ATP contacts are provided by Gly58 and Arg62. UMP is bound by residues Asp77 and 138-145 (TGNPFFTT). Residues Thr165, Phe171, and Asp174 each coordinate ATP.

This sequence belongs to the UMP kinase family. As to quaternary structure, homohexamer.

It localises to the cytoplasm. It carries out the reaction UMP + ATP = UDP + ADP. The protein operates within pyrimidine metabolism; CTP biosynthesis via de novo pathway; UDP from UMP (UMPK route): step 1/1. Allosterically activated by GTP. Inhibited by UTP. Functionally, catalyzes the reversible phosphorylation of UMP to UDP. The chain is Uridylate kinase from Aeromonas salmonicida (strain A449).